A 276-amino-acid chain; its full sequence is Type III pantothenate kinase (276 aa).

18 to 25 (EIGNSRLH) provides a ligand contact to ATP. Substrate-binding positions include Tyr-116 and 120 to 123 (GIDR). The Proton acceptor role is filled by Asp-122. Residue Asp-142 participates in K(+) binding. Thr-145 contributes to the ATP binding site. Thr-200 serves as a coordination point for substrate.

The protein belongs to the type III pantothenate kinase family. As to quaternary structure, homodimer. It depends on NH4(+) as a cofactor. Requires K(+) as cofactor.

Its subcellular location is the cytoplasm. It catalyses the reaction (R)-pantothenate + ATP = (R)-4'-phosphopantothenate + ADP + H(+). It functions in the pathway cofactor biosynthesis; coenzyme A biosynthesis; CoA from (R)-pantothenate: step 1/5. Its function is as follows. Catalyzes the phosphorylation of pantothenate (Pan), the first step in CoA biosynthesis. This is Type III pantothenate kinase from Nostoc sp. (strain PCC 7120 / SAG 25.82 / UTEX 2576).